A 367-amino-acid chain; its full sequence is 2-aminoethylphosphonate--pyruvate transaminase (367 aa).

At Lys194 the chain carries N6-(pyridoxal phosphate)lysine.

This sequence belongs to the class-V pyridoxal-phosphate-dependent aminotransferase family. PhnW subfamily. In terms of assembly, homodimer. Pyridoxal 5'-phosphate serves as cofactor.

The enzyme catalyses (2-aminoethyl)phosphonate + pyruvate = phosphonoacetaldehyde + L-alanine. Involved in phosphonate degradation. This chain is 2-aminoethylphosphonate--pyruvate transaminase, found in Salmonella choleraesuis (strain SC-B67).